The following is a 79-amino-acid chain: Acyl carrier protein (79 aa).

In terms of domain architecture, Carrier spans 1–79 (MTKEQILVDV…DVVSYIETQV (79 aa)). Serine 39 is subject to O-(pantetheine 4'-phosphoryl)serine.

This sequence belongs to the acyl carrier protein (ACP) family. In terms of processing, 4'-phosphopantetheine is transferred from CoA to a specific serine of apo-ACP by AcpS. This modification is essential for activity because fatty acids are bound in thioester linkage to the sulfhydryl of the prosthetic group.

It is found in the cytoplasm. The protein operates within lipid metabolism; fatty acid biosynthesis. In terms of biological role, carrier of the growing fatty acid chain in fatty acid biosynthesis. This is Acyl carrier protein from Exiguobacterium sibiricum (strain DSM 17290 / CCUG 55495 / CIP 109462 / JCM 13490 / 255-15).